Here is a 414-residue protein sequence, read N- to C-terminus: Putative truncated GMC-type inactive oxidoreductase R832 (414 aa).

Residues 1–20 (MNPTKLFLVFVAFAFAIINA) form the signal peptide. Residue 38–67 (DYIIVGSGPGGSRAVQQCIAKGHKCTLVER) participates in FAD binding.

Belongs to the GMC oxidoreductase family. FAD serves as cofactor.

This chain is Putative truncated GMC-type inactive oxidoreductase R832, found in Acanthamoeba polyphaga (Amoeba).